The following is a 90-amino-acid chain: uncharacterized protein (90 aa).

This is an uncharacterized protein from Saccharolobus islandicus (Sulfolobus islandicus).